Consider the following 191-residue polypeptide: Thymidylate kinase (191 aa).

Residue 7–14 participates in ATP binding; it reads GIDGVGKS.

The protein belongs to the thymidylate kinase family.

It carries out the reaction dTMP + ATP = dTDP + ADP. In terms of biological role, phosphorylation of dTMP to form dTDP in both de novo and salvage pathways of dTTP synthesis. This is Thymidylate kinase from Helicobacter acinonychis (strain Sheeba).